We begin with the raw amino-acid sequence, 234 residues long: Leucyl/phenylalanyl-tRNA--protein transferase (234 aa).

Belongs to the L/F-transferase family.

The protein localises to the cytoplasm. The catalysed reaction is N-terminal L-lysyl-[protein] + L-leucyl-tRNA(Leu) = N-terminal L-leucyl-L-lysyl-[protein] + tRNA(Leu) + H(+). It catalyses the reaction N-terminal L-arginyl-[protein] + L-leucyl-tRNA(Leu) = N-terminal L-leucyl-L-arginyl-[protein] + tRNA(Leu) + H(+). The enzyme catalyses L-phenylalanyl-tRNA(Phe) + an N-terminal L-alpha-aminoacyl-[protein] = an N-terminal L-phenylalanyl-L-alpha-aminoacyl-[protein] + tRNA(Phe). Functions in the N-end rule pathway of protein degradation where it conjugates Leu, Phe and, less efficiently, Met from aminoacyl-tRNAs to the N-termini of proteins containing an N-terminal arginine or lysine. This Tolumonas auensis (strain DSM 9187 / NBRC 110442 / TA 4) protein is Leucyl/phenylalanyl-tRNA--protein transferase.